Here is a 175-residue protein sequence, read N- to C-terminus: Translation initiation factor IF-3 (175 aa).

Belongs to the IF-3 family. Monomer.

It is found in the cytoplasm. Functionally, IF-3 binds to the 30S ribosomal subunit and shifts the equilibrium between 70S ribosomes and their 50S and 30S subunits in favor of the free subunits, thus enhancing the availability of 30S subunits on which protein synthesis initiation begins. The polypeptide is Translation initiation factor IF-3 (Chlamydia trachomatis serovar D (strain ATCC VR-885 / DSM 19411 / UW-3/Cx)).